The chain runs to 155 residues: Small ribosomal subunit protein uS9 (155 aa).

Belongs to the universal ribosomal protein uS9 family.

The sequence is that of Small ribosomal subunit protein uS9 from Sinorhizobium fredii (strain NBRC 101917 / NGR234).